The following is a 180-amino-acid chain: ATP-dependent protease subunit HslV (180 aa).

Residue threonine 5 is part of the active site. Glycine 161, cysteine 164, and threonine 167 together coordinate Na(+).

It belongs to the peptidase T1B family. HslV subfamily. A double ring-shaped homohexamer of HslV is capped on each side by a ring-shaped HslU homohexamer. The assembly of the HslU/HslV complex is dependent on binding of ATP.

Its subcellular location is the cytoplasm. The enzyme catalyses ATP-dependent cleavage of peptide bonds with broad specificity.. Its activity is regulated as follows. Allosterically activated by HslU binding. Its function is as follows. Protease subunit of a proteasome-like degradation complex believed to be a general protein degrading machinery. This Campylobacter fetus subsp. fetus (strain 82-40) protein is ATP-dependent protease subunit HslV.